We begin with the raw amino-acid sequence, 261 residues long: Proteasome subunit alpha type-4 (261 aa).

2 positions are modified to phosphoserine: Ser-13 and Ser-75. Lys-127 carries the N6-acetyllysine modification. The residue at position 173 (Ser-173) is a Phosphoserine. The residue at position 176 (Lys-176) is an N6-acetyllysine. Positions 240–261 are disordered; that stretch reads HEEEEAKAEREKKEKEQREKDK.

This sequence belongs to the peptidase T1A family. The 26S proteasome consists of a 20S proteasome core and two 19S regulatory subunits. The 20S proteasome core is a barrel-shaped complex made of 28 subunits that are arranged in four stacked rings. The two outer rings are each formed by seven alpha subunits, and the two inner rings are formed by seven beta subunits. The proteolytic activity is exerted by three beta-subunits PSMB5, PSMB6 and PSMB7. Ubiquitous.

The protein localises to the cytoplasm. The protein resides in the nucleus. In terms of biological role, component of the 20S core proteasome complex involved in the proteolytic degradation of most intracellular proteins. This complex plays numerous essential roles within the cell by associating with different regulatory particles. Associated with two 19S regulatory particles, forms the 26S proteasome and thus participates in the ATP-dependent degradation of ubiquitinated proteins. The 26S proteasome plays a key role in the maintenance of protein homeostasis by removing misfolded or damaged proteins that could impair cellular functions, and by removing proteins whose functions are no longer required. Associated with the PA200 or PA28, the 20S proteasome mediates ubiquitin-independent protein degradation. This type of proteolysis is required in several pathways including spermatogenesis (20S-PA200 complex) or generation of a subset of MHC class I-presented antigenic peptides (20S-PA28 complex). The protein is Proteasome subunit alpha type-4 (Psma4) of Rattus norvegicus (Rat).